Reading from the N-terminus, the 311-residue chain is Bifunctional protein FolD (311 aa).

Position 174-176 (174-176 (GKG)) interacts with NADP(+).

It belongs to the tetrahydrofolate dehydrogenase/cyclohydrolase family. In terms of assembly, homodimer.

It carries out the reaction (6R)-5,10-methylene-5,6,7,8-tetrahydrofolate + NADP(+) = (6R)-5,10-methenyltetrahydrofolate + NADPH. The enzyme catalyses (6R)-5,10-methenyltetrahydrofolate + H2O = (6R)-10-formyltetrahydrofolate + H(+). It participates in one-carbon metabolism; tetrahydrofolate interconversion. Its function is as follows. Catalyzes the oxidation of 5,10-methylenetetrahydrofolate to 5,10-methenyltetrahydrofolate and then the hydrolysis of 5,10-methenyltetrahydrofolate to 10-formyltetrahydrofolate. This Pyrobaculum neutrophilum (strain DSM 2338 / JCM 9278 / NBRC 100436 / V24Sta) (Thermoproteus neutrophilus) protein is Bifunctional protein FolD.